A 450-amino-acid chain; its full sequence is Exodeoxyribonuclease 7 large subunit (450 aa).

It belongs to the XseA family. As to quaternary structure, heterooligomer composed of large and small subunits.

The protein resides in the cytoplasm. The enzyme catalyses Exonucleolytic cleavage in either 5'- to 3'- or 3'- to 5'-direction to yield nucleoside 5'-phosphates.. Bidirectionally degrades single-stranded DNA into large acid-insoluble oligonucleotides, which are then degraded further into small acid-soluble oligonucleotides. This chain is Exodeoxyribonuclease 7 large subunit, found in Listeria monocytogenes serovar 1/2a (strain ATCC BAA-679 / EGD-e).